The chain runs to 294 residues: 3-methyl-2-oxobutanoate hydroxymethyltransferase 1 (294 aa).

Asp55 is a binding site for Mg(2+). 3-methyl-2-oxobutanoate is bound by residues 55–56 (DS) and Lys123. Catalysis depends on Glu192, which acts as the Proton acceptor.

The protein belongs to the PanB family. Homodecamer; pentamer of dimers. Mg(2+) serves as cofactor.

It localises to the cytoplasm. It carries out the reaction 3-methyl-2-oxobutanoate + (6R)-5,10-methylene-5,6,7,8-tetrahydrofolate + H2O = 2-dehydropantoate + (6S)-5,6,7,8-tetrahydrofolate. Its pathway is cofactor biosynthesis; (R)-pantothenate biosynthesis; (R)-pantoate from 3-methyl-2-oxobutanoate: step 1/2. Functionally, catalyzes the reversible reaction in which hydroxymethyl group from 5,10-methylenetetrahydrofolate is transferred onto alpha-ketoisovalerate to form ketopantoate. This chain is 3-methyl-2-oxobutanoate hydroxymethyltransferase 1, found in Methylibium petroleiphilum (strain ATCC BAA-1232 / LMG 22953 / PM1).